The primary structure comprises 178 residues: Protein GrpE (178 aa).

Polar residues predominate over residues 1-11 (MENTQENPTDQ). The interval 1–31 (MENTQENPTDQTTEETGREAQAAENAAPAAE) is disordered. The segment covering 19-31 (EAQAAENAAPAAE) has biased composition (low complexity).

It belongs to the GrpE family. Homodimer.

It is found in the cytoplasm. Its function is as follows. Participates actively in the response to hyperosmotic and heat shock by preventing the aggregation of stress-denatured proteins, in association with DnaK and GrpE. It is the nucleotide exchange factor for DnaK and may function as a thermosensor. Unfolded proteins bind initially to DnaJ; upon interaction with the DnaJ-bound protein, DnaK hydrolyzes its bound ATP, resulting in the formation of a stable complex. GrpE releases ADP from DnaK; ATP binding to DnaK triggers the release of the substrate protein, thus completing the reaction cycle. Several rounds of ATP-dependent interactions between DnaJ, DnaK and GrpE are required for fully efficient folding. The sequence is that of Protein GrpE from Burkholderia thailandensis (strain ATCC 700388 / DSM 13276 / CCUG 48851 / CIP 106301 / E264).